A 364-amino-acid chain; its full sequence is Fructose-bisphosphate aldolase B (364 aa).

Residues arginine 56 and lysine 147 each coordinate substrate. Catalysis depends on glutamate 188, which acts as the Proton acceptor. Lysine 230 acts as the Schiff-base intermediate with dihydroxyacetone-P in catalysis.

It belongs to the class I fructose-bisphosphate aldolase family. As to quaternary structure, homotetramer.

It localises to the cytoplasm. The protein resides in the cytoskeleton. It is found in the microtubule organizing center. The protein localises to the centrosome. Its subcellular location is the centriolar satellite. The catalysed reaction is beta-D-fructose 1,6-bisphosphate = D-glyceraldehyde 3-phosphate + dihydroxyacetone phosphate. It participates in carbohydrate degradation; glycolysis; D-glyceraldehyde 3-phosphate and glycerone phosphate from D-glucose: step 4/4. The polypeptide is Fructose-bisphosphate aldolase B (ALDOB) (Gallus gallus (Chicken)).